The primary structure comprises 279 residues: MRDSVFNCCVSPPHPPGAAAAERRSRSPAPQNHSRFLMFFDFDETLVDECSDDSMVSAAPGGVLPGWLKDTYRPGRYNEYMQRVLAYLSEQGVTPAAIRATVEKLPPCPGIPALMHFLLSQPSRDFEVVCVSDANTVFIETWLQHMGFQPLFLRIFTNPAHFDDNGVLQLRPFHSHECLRCPANMCKAVVVRQYVAQRIRERGGRPYQKVLYMGDGANDFCPSLTLSPGDVAFPRRDFPMHKLIQEMGEAKPGEFKASVVPWKSGEDVVNTLRKILERT.

Residue D41 is the Nucleophile of the active site. Mg(2+)-binding residues include D41 and D43. D43 functions as the Proton donor in the catalytic mechanism. Substrate contacts are provided by D52 and D133. Residue D215 participates in Mg(2+) binding.

This sequence belongs to the HAD-like hydrolase superfamily. PHOSPHO family. Requires Mg(2+) as cofactor.

It localises to the extracellular vesicle. The enzyme catalyses phosphoethanolamine + H2O = ethanolamine + phosphate. It catalyses the reaction phosphocholine + H2O = choline + phosphate. Phosphatase that has a high activity toward phosphoethanolamine (PEA) and phosphocholine (PCho). Involved in the generation of inorganic phosphate for bone mineralization. This Danio rerio (Zebrafish) protein is Probable phosphatase phospho1 (phospho1).